We begin with the raw amino-acid sequence, 516 residues long: Acetylcholine receptor subunit alpha-like (516 aa).

A signal peptide spans 1–21 (MRSVTKYYLHGVVLFATGCAG). Residues 22-243 (NPDAKRLYDD…ITMRRKTLFY (222 aa)) lie on the Extracellular side of the membrane. Asn-45 and Asn-132 each carry an N-linked (GlcNAc...) asparagine glycan. 2 disulfide bridges follow: Cys-149-Cys-163 and Cys-222-Cys-223. N-linked (GlcNAc...) asparagine glycosylation is present at Asn-233. A run of 3 helical transmembrane segments spans residues 244–264 (TVNL…VFYL), 274–294 (LSIS…EIIP), and 306–326 (FVLF…VVLN). Residues 327-465 (VHFRSPQTHT…WKYVAMVLDR (139 aa)) lie on the Cytoplasmic side of the membrane. The chain crosses the membrane as a helical span at residues 466–486 (PFLWIFTLAVVVGSAGIILQA).

The protein belongs to the ligand-gated ion channel (TC 1.A.9) family. Acetylcholine receptor (TC 1.A.9.1) subfamily.

It localises to the postsynaptic cell membrane. The protein localises to the cell membrane. Its function is as follows. After binding acetylcholine, the AChR responds by an extensive change in conformation that affects all subunits and leads to opening of an ion-conducting channel across the plasma membrane. This Manduca sexta (Tobacco hawkmoth) protein is Acetylcholine receptor subunit alpha-like (ARA1).